Here is a 220-residue protein sequence, read N- to C-terminus: MAEYLASIFGTEKDKVNCSFYFKIGVCRHGDRCSRLHNKPTFSQTIVLLNLYRNPQNTAQTADGSHCHVSDVEVQEHYDSFFEEVFTELQEKYGEIEEMNVCDNLGDHLVGNVYVKFRREEDGERAVAELSNRWFNGQAVHGELSPVTDFRESCCRQYEMGECTRGGFCNFMHLRPISQNLQRQLYGRGPRRRSPPRFHTGHHPRERNHRCSPDHWHGRF.

An N-acetylalanine modification is found at alanine 2. The segment at 12-40 (EKDKVNCSFYFKIGVCRHGDRCSRLHNKP) adopts a C3H1-type 1 zinc-finger fold. In terms of domain architecture, RRM spans 65–147 (SHCHVSDVEV…QAVHGELSPV (83 aa)). The C3H1-type 2 zinc-finger motif lies at 149-176 (DFRESCCRQYEMGECTRGGFCNFMHLRP). Residues 185–220 (LYGRGPRRRSPPRFHTGHHPRERNHRCSPDHWHGRF) form a disordered region. Over residues 189 to 208 (GPRRRSPPRFHTGHHPRERN) the composition is skewed to basic residues. Residues 209–220 (HRCSPDHWHGRF) show a composition bias toward basic and acidic residues.

Belongs to the splicing factor SR family. Interacts with GFI1, U2AF2 and C1QBP. Isoform 2 is widely expressed. Isoform 3 is highly expressed in heart, brain and lung, lower expressed in thymus and much lower expressed in peripheral blood leukocytes.

Its subcellular location is the nucleus. The protein resides in the nucleus speckle. The protein localises to the cytoplasm. Its function is as follows. RNA-binding protein that function as a pre-mRNA splicing factor. Plays a critical role in both constitutive and enhancer-dependent splicing by mediating protein-protein interactions and protein-RNA interactions required for accurate 3'-splice site selection. Acts by enhancing the binding of U2AF2 to weak pyrimidine tracts. Also participates in the regulation of alternative pre-mRNA splicing. Activates exon 5 skipping of PTPRC during T-cell activation; an event reversed by GFI1. Binds to RNA at the AG dinucleotide at the 3'-splice site. Shows a preference for AGC or AGA. This Homo sapiens (Human) protein is Splicing factor U2AF 26 kDa subunit (U2AF1L4).